Here is a 310-residue protein sequence, read N- to C-terminus: Membrane protein insertase YidC 2 (310 aa).

Residues 1 to 23 (MKKIYKRLLFSGLALSMLFFLSG) form the signal peptide. Residue cysteine 24 is the site of N-palmitoyl cysteine attachment. Cysteine 24 is lipidated: S-diacylglycerol cysteine. 5 helical membrane passes run 34 to 54 (GEGWVYKFFAAPMGSVIQYLA), 57 to 77 (LGLGFGFAIIIVTVIVRLLIL), 136 to 156 (FGGLGCLPLLIQMPFFSALYI), 180 to 200 (IITVIIGILYLVQSWVSTLSV), and 220 to 240 (VMISIGAPAGGALYWLVSGIF). The disordered stretch occupies residues 263 to 310 (EFKKNPPKPFKSNARKDITPQANNDKKLITSKKQKSNRNAGKQRHHKQ). Residues 276-290 (ARKDITPQANNDKKL) show a composition bias toward basic and acidic residues. Over residues 291–310 (ITSKKQKSNRNAGKQRHHKQ) the composition is skewed to basic residues.

This sequence belongs to the OXA1/ALB3/YidC family. Type 2 subfamily.

Its subcellular location is the cell membrane. Its function is as follows. Required for the insertion and/or proper folding and/or complex formation of integral membrane proteins into the membrane. Involved in integration of membrane proteins that insert both dependently and independently of the Sec translocase complex, as well as at least some lipoproteins. Partially complements an E.coli yidC depletion experiment. The polypeptide is Membrane protein insertase YidC 2 (yidC2) (Streptococcus mutans serotype c (strain ATCC 700610 / UA159)).